A 63-amino-acid polypeptide reads, in one-letter code: Large ribosomal subunit protein uL30 (63 aa).

It belongs to the universal ribosomal protein uL30 family. As to quaternary structure, part of the 50S ribosomal subunit.

The sequence is that of Large ribosomal subunit protein uL30 from Granulibacter bethesdensis (strain ATCC BAA-1260 / CGDNIH1).